Here is a 435-residue protein sequence, read N- to C-terminus: Cysteine--tRNA ligase (435 aa).

Residue cysteine 24 coordinates Zn(2+). The 'HIGH' region signature appears at proline 26–asparagine 36. Residues cysteine 202, histidine 228, and glutamate 232 each coordinate Zn(2+). Positions lysine 260–serine 264 match the 'KMSKS' region motif. An ATP-binding site is contributed by lysine 263.

The protein belongs to the class-I aminoacyl-tRNA synthetase family. In terms of assembly, monomer. The cofactor is Zn(2+).

Its subcellular location is the cytoplasm. It catalyses the reaction tRNA(Cys) + L-cysteine + ATP = L-cysteinyl-tRNA(Cys) + AMP + diphosphate. This is Cysteine--tRNA ligase from Mycoplasmoides gallisepticum (strain R(low / passage 15 / clone 2)) (Mycoplasma gallisepticum).